The sequence spans 268 residues: Type III pantothenate kinase (268 aa).

18-25 (DIGNTTTT) is a binding site for ATP. Residues Tyr108 and 115–118 (GADR) each bind substrate. Asp117 (proton acceptor) is an active-site residue. Asp138 is a binding site for K(+). Thr141 is an ATP binding site. A substrate-binding site is contributed by Thr193.

This sequence belongs to the type III pantothenate kinase family. Homodimer. Requires NH4(+) as cofactor. The cofactor is K(+).

Its subcellular location is the cytoplasm. It catalyses the reaction (R)-pantothenate + ATP = (R)-4'-phosphopantothenate + ADP + H(+). It functions in the pathway cofactor biosynthesis; coenzyme A biosynthesis; CoA from (R)-pantothenate: step 1/5. Catalyzes the phosphorylation of pantothenate (Pan), the first step in CoA biosynthesis. This is Type III pantothenate kinase from Chlorobaculum parvum (strain DSM 263 / NCIMB 8327) (Chlorobium vibrioforme subsp. thiosulfatophilum).